A 457-amino-acid chain; its full sequence is Cell division protein FtsA (457 aa).

This sequence belongs to the FtsA/MreB family. In terms of assembly, self-interacts. Interacts with FtsZ.

The protein localises to the cell membrane. Its function is as follows. Cell division protein that is involved in the assembly of the Z ring. May serve as a membrane anchor for the Z ring. Increased expression restores growth to a PBP2b (penA) deletion strain as well as mreCD and rodA deletions, but not gpsB or rodZ deletions. Does not restore wild-type cell morphology to the penA deletion. The polypeptide is Cell division protein FtsA (Streptococcus pneumoniae serotype 2 (strain D39 / NCTC 7466)).